We begin with the raw amino-acid sequence, 306 residues long: Aspartate carbamoyltransferase catalytic subunit (306 aa).

Positions 56 and 57 each coordinate carbamoyl phosphate. An L-aspartate-binding site is contributed by Lys84. Carbamoyl phosphate-binding residues include Arg106, His136, and Gln139. Residues Arg169 and Arg221 each coordinate L-aspartate. 2 residues coordinate carbamoyl phosphate: Ala262 and Pro263.

This sequence belongs to the aspartate/ornithine carbamoyltransferase superfamily. ATCase family. As to quaternary structure, heterododecamer (2C3:3R2) of six catalytic PyrB chains organized as two trimers (C3), and six regulatory PyrI chains organized as three dimers (R2).

It carries out the reaction carbamoyl phosphate + L-aspartate = N-carbamoyl-L-aspartate + phosphate + H(+). It participates in pyrimidine metabolism; UMP biosynthesis via de novo pathway; (S)-dihydroorotate from bicarbonate: step 2/3. Its function is as follows. Catalyzes the condensation of carbamoyl phosphate and aspartate to form carbamoyl aspartate and inorganic phosphate, the committed step in the de novo pyrimidine nucleotide biosynthesis pathway. This is Aspartate carbamoyltransferase catalytic subunit from Streptococcus gordonii (strain Challis / ATCC 35105 / BCRC 15272 / CH1 / DL1 / V288).